The primary structure comprises 269 residues: Putative biopolymer transport protein ExbD (269 aa).

Topologically, residues 1–40 are cytoplasmic; it reads MASSPKAPKSHRKFQSIYHPTRPLSLWQDNQHDQGEVRIE. Residues 41 to 61 form a helical membrane-spanning segment; the sequence is IIPLIDVVFCILTFFILGAVG. Residues 62-269 lie on the Periplasmic side of the membrane; it reads LSRQQAISLD…GNTVPSAPQQ (208 aa). The tract at residues 190–269 is disordered; that stretch reads NGANPGMSNF…GNTVPSAPQQ (80 aa). Over residues 193–204 the composition is skewed to low complexity; it reads NPGMSNFNNSNP.

It belongs to the ExbD/TolR family.

The protein localises to the cell inner membrane. In Synechocystis sp. (strain ATCC 27184 / PCC 6803 / Kazusa), this protein is Putative biopolymer transport protein ExbD.